The sequence spans 325 residues: Small ribosomal subunit protein uS4m (325 aa).

One can recognise an S4 RNA-binding domain in the interval lysine 146 to lysine 209.

This sequence belongs to the universal ribosomal protein uS4 family.

The protein resides in the mitochondrion. This Dictyostelium citrinum (Slime mold) protein is Small ribosomal subunit protein uS4m (mrps4).